We begin with the raw amino-acid sequence, 474 residues long: MAVDADSANYRIEHDTMGEVRVPAKALWRAQTQRAVENFPISGRGLERTQIRALGLLKGACAQVNSDLGLLAPEKADAIIAAAAEIADGQHDDQFPIDVFQTGSGTSSNMNTNEVIASIAAKGGVTLHPNDDVNMSQSSNDTFPTATHIAATEAAVAHLIPALQQLHDALAAKALDWHTVVKSGRTHLMDAVPVTLGQEFSGYARQIEAGIERVRACLPRLGELAIGGTAVGTGLNAPDDFGVRVVAVLVAQTGLSELRTAANSFEAQAARDGLVEASGALRTIAVSLTKIANDIRWMGSGPLTGLAEIQLPDLQPGSSIMPGKVNPVLPEAVTQVAAQVIGNDAAIAWGGANGAFELNVYIPMMARNILESFKLLTNVSRLFAQRCIAGLTANVEHLRRLAESSPSIVTPLNSAIGYEEAAAVAKQALKERKTIRQTVIDRGLIGDRLSIEDLDRRLDVLAMAKAEQLDSDRL.

Substrate is bound by residues 104–106 (SGT), 128–131 (HPND), 138–140 (SSN), and T186. The active-site Proton donor/acceptor is H187. S318 is an active-site residue. Substrate-binding positions include S319 and 324 to 326 (KVN).

The protein belongs to the class-II fumarase/aspartase family. Fumarase subfamily. Homotetramer.

It localises to the cytoplasm. The catalysed reaction is (S)-malate = fumarate + H2O. It participates in carbohydrate metabolism; tricarboxylic acid cycle; (S)-malate from fumarate: step 1/1. Its function is as follows. Involved in the TCA cycle. Catalyzes the stereospecific interconversion of fumarate to L-malate. The polypeptide is Fumarate hydratase class II (Mycobacterium bovis (strain ATCC BAA-935 / AF2122/97)).